A 336-amino-acid chain; its full sequence is Holliday junction branch migration complex subunit RuvB (336 aa).

The interval 4–184 is large ATPase domain (RuvB-L); that stretch reads ADRIISAIAK…FGIVQRLEFY (181 aa). Residues isoleucine 23, arginine 24, glycine 65, lysine 68, threonine 69, threonine 70, 131-133, arginine 174, tyrosine 184, and arginine 221 contribute to the ATP site; that span reads EDY. Threonine 69 provides a ligand contact to Mg(2+). A small ATPAse domain (RuvB-S) region spans residues 185–255; the sequence is SIEDLTSIVM…IAKAALAMLD (71 aa). The head domain (RuvB-H) stretch occupies residues 258-336; it reads QAGFDYLDRK…HFGLAKLADK (79 aa). DNA contacts are provided by arginine 294, arginine 313, and arginine 318.

The protein belongs to the RuvB family. As to quaternary structure, homohexamer. Forms an RuvA(8)-RuvB(12)-Holliday junction (HJ) complex. HJ DNA is sandwiched between 2 RuvA tetramers; dsDNA enters through RuvA and exits via RuvB. An RuvB hexamer assembles on each DNA strand where it exits the tetramer. Each RuvB hexamer is contacted by two RuvA subunits (via domain III) on 2 adjacent RuvB subunits; this complex drives branch migration. In the full resolvosome a probable DNA-RuvA(4)-RuvB(12)-RuvC(2) complex forms which resolves the HJ.

Its subcellular location is the cytoplasm. It catalyses the reaction ATP + H2O = ADP + phosphate + H(+). The RuvA-RuvB-RuvC complex processes Holliday junction (HJ) DNA during genetic recombination and DNA repair, while the RuvA-RuvB complex plays an important role in the rescue of blocked DNA replication forks via replication fork reversal (RFR). RuvA specifically binds to HJ cruciform DNA, conferring on it an open structure. The RuvB hexamer acts as an ATP-dependent pump, pulling dsDNA into and through the RuvAB complex. RuvB forms 2 homohexamers on either side of HJ DNA bound by 1 or 2 RuvA tetramers; 4 subunits per hexamer contact DNA at a time. Coordinated motions by a converter formed by DNA-disengaged RuvB subunits stimulates ATP hydrolysis and nucleotide exchange. Immobilization of the converter enables RuvB to convert the ATP-contained energy into a lever motion, pulling 2 nucleotides of DNA out of the RuvA tetramer per ATP hydrolyzed, thus driving DNA branch migration. The RuvB motors rotate together with the DNA substrate, which together with the progressing nucleotide cycle form the mechanistic basis for DNA recombination by continuous HJ branch migration. Branch migration allows RuvC to scan DNA until it finds its consensus sequence, where it cleaves and resolves cruciform DNA. The chain is Holliday junction branch migration complex subunit RuvB from Actinobacillus succinogenes (strain ATCC 55618 / DSM 22257 / CCUG 43843 / 130Z).